The sequence spans 490 residues: Acetyl-coenzyme A carboxylase carboxyl transferase subunit beta, chloroplastic (490 aa).

Residues 184 to 203 (LNSSENEGSSRRTRTKGSDL) form a disordered region. A CoA carboxyltransferase N-terminal domain is found at 221–490 (LWVQCENCYG…PLNQKSSKIK (270 aa)). Positions 225, 228, 244, and 247 each coordinate Zn(2+). Residues 225–247 (CENCYGLNYKKFLKSKMNICEQC) form a C4-type zinc finger.

This sequence belongs to the AccD/PCCB family. In terms of assembly, acetyl-CoA carboxylase is a heterohexamer composed of biotin carboxyl carrier protein, biotin carboxylase and 2 subunits each of ACCase subunit alpha and ACCase plastid-coded subunit beta (accD). The cofactor is Zn(2+).

The protein resides in the plastid. The protein localises to the chloroplast stroma. It carries out the reaction N(6)-carboxybiotinyl-L-lysyl-[protein] + acetyl-CoA = N(6)-biotinyl-L-lysyl-[protein] + malonyl-CoA. It functions in the pathway lipid metabolism; malonyl-CoA biosynthesis; malonyl-CoA from acetyl-CoA: step 1/1. In terms of biological role, component of the acetyl coenzyme A carboxylase (ACC) complex. Biotin carboxylase (BC) catalyzes the carboxylation of biotin on its carrier protein (BCCP) and then the CO(2) group is transferred by the transcarboxylase to acetyl-CoA to form malonyl-CoA. The polypeptide is Acetyl-coenzyme A carboxylase carboxyl transferase subunit beta, chloroplastic (Solanum bulbocastanum (Wild potato)).